Here is a 117-residue protein sequence, read N- to C-terminus: Large ribosomal subunit protein bL20c (117 aa).

Belongs to the bacterial ribosomal protein bL20 family.

Its subcellular location is the plastid. The protein resides in the chloroplast. Functionally, binds directly to 23S ribosomal RNA and is necessary for the in vitro assembly process of the 50S ribosomal subunit. It is not involved in the protein synthesizing functions of that subunit. This Calycanthus floridus var. glaucus (Eastern sweetshrub) protein is Large ribosomal subunit protein bL20c.